The sequence spans 619 residues: MPEYRSKTSTHGRNMAGARALWRATGVMETDFGKPIIAVANSFTQFVPGHVHLHNMGQLVAREIEKAGAIAKEFNTIAIDDGIAMGHSGMLYSLPSRDLIADSIEYMVNAHCADALVCISNCDKITPGMLIAAMRLNIPTIFVSGGPMEAGKVIGVANIQPERRLDLIDAMIESADDNVSNRQVEEVEQNACPTCGSCSGMFTANSMNCLTEALGLSLPGNGSYLATHVGRKELFLEAGRMIVEITKRYYEQNDETVLPRSIATKKAFENAMTMDIAMGGSTNTILHLLAVANEAGVDFKMADIDRLSRVVPCICKTAPNNHDYYMEDVHRAGGIFAILKELDKAGKLHTDVHTIHAPTLKDAIEKWDITNPENTRAIERFKAAPGGVRTTQAFSQNRMWKTLDLDREKGCIRDVAHAYSQDGGLAVLFGNIAERGCVVKTAGVDESILKFTGRARVFESQEDAVEGILGNQIVAGDIVIIRYEGPKGGPGMQEMLYPTSYLKSKGLGKACALLTDGRFSGGTSGLSIGHASPEAAEGGAIGLVHEGDTVEIDIPNRSIHLAISDEELAARRAEMEARGSKAWKPENRDRYVSAALRAYGAMATSADKGAVRDVAQIER.

Asp81 contacts Mg(2+). Cys122 contacts [2Fe-2S] cluster. 2 residues coordinate Mg(2+): Asp123 and Lys124. The residue at position 124 (Lys124) is an N6-carboxylysine. Residue Cys198 coordinates [2Fe-2S] cluster. Glu494 lines the Mg(2+) pocket. Ser520 (proton acceptor) is an active-site residue.

The protein belongs to the IlvD/Edd family. In terms of assembly, homodimer. It depends on [2Fe-2S] cluster as a cofactor. Mg(2+) is required as a cofactor.

It catalyses the reaction (2R)-2,3-dihydroxy-3-methylbutanoate = 3-methyl-2-oxobutanoate + H2O. The catalysed reaction is (2R,3R)-2,3-dihydroxy-3-methylpentanoate = (S)-3-methyl-2-oxopentanoate + H2O. It participates in amino-acid biosynthesis; L-isoleucine biosynthesis; L-isoleucine from 2-oxobutanoate: step 3/4. The protein operates within amino-acid biosynthesis; L-valine biosynthesis; L-valine from pyruvate: step 3/4. In terms of biological role, functions in the biosynthesis of branched-chain amino acids. Catalyzes the dehydration of (2R,3R)-2,3-dihydroxy-3-methylpentanoate (2,3-dihydroxy-3-methylvalerate) into 2-oxo-3-methylpentanoate (2-oxo-3-methylvalerate) and of (2R)-2,3-dihydroxy-3-methylbutanoate (2,3-dihydroxyisovalerate) into 2-oxo-3-methylbutanoate (2-oxoisovalerate), the penultimate precursor to L-isoleucine and L-valine, respectively. This chain is Dihydroxy-acid dehydratase, found in Neisseria meningitidis serogroup C / serotype 2a (strain ATCC 700532 / DSM 15464 / FAM18).